The primary structure comprises 750 residues: Polyribonucleotide nucleotidyltransferase (750 aa).

Mg(2+) is bound by residues aspartate 492 and aspartate 498. Positions 559 to 618 (PQLSVVEVNPEIIRVIIGPGGKNIKAITSATGASIDIEDSGRISIFAPTKESMDMAREMV) constitute a KH domain. One can recognise an S1 motif domain in the interval 628–695 (GKNYTAKVRK…NDGRVRASRK (68 aa)). The segment at 705 to 750 (EWDPADTARPPRKPRDRDDRGDRGGRGDRGDRGGRNGRGGDRRDRR) is disordered. Residues 717-750 (KPRDRDDRGDRGGRGDRGDRGGRNGRGGDRRDRR) are compositionally biased toward basic and acidic residues.

Belongs to the polyribonucleotide nucleotidyltransferase family. Mg(2+) is required as a cofactor.

Its subcellular location is the cytoplasm. It carries out the reaction RNA(n+1) + phosphate = RNA(n) + a ribonucleoside 5'-diphosphate. Involved in mRNA degradation. Catalyzes the phosphorolysis of single-stranded polyribonucleotides processively in the 3'- to 5'-direction. The protein is Polyribonucleotide nucleotidyltransferase of Oleidesulfovibrio alaskensis (strain ATCC BAA-1058 / DSM 17464 / G20) (Desulfovibrio alaskensis).